The primary structure comprises 272 residues: 2,3,4,5-tetrahydropyridine-2,6-dicarboxylate N-succinyltransferase (272 aa).

Substrate is bound by residues Arg-104 and Asp-141.

The protein belongs to the transferase hexapeptide repeat family. Homotrimer.

It is found in the cytoplasm. It carries out the reaction (S)-2,3,4,5-tetrahydrodipicolinate + succinyl-CoA + H2O = (S)-2-succinylamino-6-oxoheptanedioate + CoA. The protein operates within amino-acid biosynthesis; L-lysine biosynthesis via DAP pathway; LL-2,6-diaminopimelate from (S)-tetrahydrodipicolinate (succinylase route): step 1/3. This chain is 2,3,4,5-tetrahydropyridine-2,6-dicarboxylate N-succinyltransferase, found in Dechloromonas aromatica (strain RCB).